We begin with the raw amino-acid sequence, 184 residues long: MINDLKKDSEQRMLKTLESLEQGFAKVRTGRAHPSILNGVMVPYYGSDVPLNQVANVGVEDSRTLIVQPFERTMVAAIDKAIRESDLGLNPITADSIRVPLPALTEETRRDMQKIARSEAENAKVAIRNIRRDVLGDIKALLKEKEISEDDERRAGDDIQKITDKYVAEVDKRLAAKEAELMKV.

The protein belongs to the RRF family.

The protein resides in the cytoplasm. Responsible for the release of ribosomes from messenger RNA at the termination of protein biosynthesis. May increase the efficiency of translation by recycling ribosomes from one round of translation to another. The sequence is that of Ribosome-recycling factor from Acinetobacter baumannii (strain AB307-0294).